Reading from the N-terminus, the 510-residue chain is Bone morphogenetic protein 6 (510 aa).

Positions 1–20 (MPGLGRRAQWLCWWWGLLCS) are cleaved as a signal peptide. Residues 21–371 (CGPPPLRPPL…VSEVHVRTTR (351 aa)) constitute a propeptide that is removed on maturation. 2 disordered regions span residues 87–129 (PHRP…RLKS) and 143–199 (NDDE…PLTS). Positions 106-116 (PQQQQQQQQQQ) are enriched in low complexity. N-linked (GlcNAc...) asparagine glycans are attached at residues Asn238, Asn266, Asn383, Asn401, and Asn451. Residues 370-402 (TRSASSRRRQQSRNRSTQSQDVSRGSGSSDYNG) are disordered. The segment covering 390–401 (DVSRGSGSSDYN) has biased composition (polar residues). Disulfide bonds link Cys409-Cys475, Cys438-Cys507, and Cys442-Cys509.

This sequence belongs to the TGF-beta family. In terms of assembly, interacts with SOSTDC1. Interacts (when glycosylated) with type I receptor ACVR1; the interaction may induce HAMP expression. Interacts with type II receptor ACVR2B. Interacts with Hemojuvelin/HJV. Interacts with ERFE; the interaction inhibits BMP-induced transcription of HAMP. Interacts with BMPR1A/ALK3. Forms heterodimers with BMP2 in vitro; the heterodimer then binds to its receptor BMPR1A /ALK3 and may induce HAMP expression. Expressed in the lung. Low levels seen in the kidney.

The protein localises to the secreted. Growth factor of the TGF-beta superfamily that plays essential roles in many developmental processes including cartilage and bone formation. Also plays an important role in the regulation of HAMP/hepcidin expression and iron metabolism by acting as a ligand for hemojuvelin/HJV. Also acts to promote expression of HAMP, potentially via the interaction with its receptor BMPR1A/ALK3. Initiates the canonical BMP signaling cascade by associating with type I receptor ACVR1 and type II receptor ACVR2B. In turn, ACVR1 propagates signal by phosphorylating SMAD1/5/8 that travel to the nucleus and act as activators and repressors of transcription of target. Can also signal through non-canonical pathway such as TAZ-Hippo signaling cascade to modulate VEGF signaling by regulating VEGFR2 expression. The sequence is that of Bone morphogenetic protein 6 (Bmp6) from Mus musculus (Mouse).